The following is a 142-amino-acid chain: Serine/threonine-protein kinase BtrW (142 aa).

Belongs to the anti-sigma-factor family. Probably able to multimerize; interacts with BtrV.

The catalysed reaction is L-seryl-[protein] + ATP = O-phospho-L-seryl-[protein] + ADP + H(+). The enzyme catalyses L-threonyl-[protein] + ATP = O-phospho-L-threonyl-[protein] + ADP + H(+). Its function is as follows. Possible negative regulator of sigma-B activity. Phosphorylates and inactivates its specific antagonist protein, BtrV. Upon phosphorylation of BtrV, BtrW is released and binds to an unknown partner(s) that might be sigma-B, thereby blocking its ability to form a complex with its partner (possibly an RNA polymerase holoenzyme (E-sigma-B)). Involved in type III secretion system (T3SS). Phosphorylates BtrV. The sequence is that of Serine/threonine-protein kinase BtrW (btrW) from Bordetella bronchiseptica (strain ATCC BAA-588 / NCTC 13252 / RB50) (Alcaligenes bronchisepticus).